A 39-amino-acid chain; its full sequence is Gonadal protein gdl-ORF39 (39 aa).

In bundles of maturing sperm of larval, pupal and adult males.

The chain is Gonadal protein gdl-ORF39 (gdl-ORF39) from Drosophila melanogaster (Fruit fly).